The following is a 110-amino-acid chain: ATP-dependent Clp protease adapter protein ClpS (110 aa).

Belongs to the ClpS family. As to quaternary structure, binds to the N-terminal domain of the chaperone ClpA.

Functionally, involved in the modulation of the specificity of the ClpAP-mediated ATP-dependent protein degradation. This Bartonella henselae (strain ATCC 49882 / DSM 28221 / CCUG 30454 / Houston 1) (Rochalimaea henselae) protein is ATP-dependent Clp protease adapter protein ClpS.